We begin with the raw amino-acid sequence, 605 residues long: Probable serine/threonine-protein kinase DDB_G0286481 (605 aa).

Residues 5 to 25 traverse the membrane as a helical segment; it reads YQIFFLLYLLCILYVISCGYI. N-linked (GlcNAc...) asparagine glycosylation is present at Asn53. Composition is skewed to low complexity over residues 54–81 and 89–104; these read SSNN…NNNN and NCNN…NKSN. The disordered stretch occupies residues 54-170; that stretch reads SSNNNNNNNN…LGGSMGSGSQ (117 aa). 4 N-linked (GlcNAc...) asparagine glycosylation sites follow: Asn92, Asn93, Asn97, and Asn101. A compositionally biased stretch (basic residues) spans 105–123; that stretch reads IKNKQHHHHSNFRNRRGKS. Asn127 carries an N-linked (GlcNAc...) asparagine glycan. Positions 144–155 are enriched in polar residues; sequence QSSSYDTSELHQ. Asn280 carries N-linked (GlcNAc...) asparagine glycosylation. The 286-residue stretch at 312-597 folds into the Protein kinase domain; sequence YEVIQKIGRG…AKEAMKHPYF (286 aa). ATP contacts are provided by residues 318-326 and Lys341; that span reads IGRGKYSEV. Asn390 is a glycosylation site (N-linked (GlcNAc...) asparagine). Residue Asp429 is the Proton acceptor of the active site. Residue Asn601 is glycosylated (N-linked (GlcNAc...) asparagine).

This sequence belongs to the protein kinase superfamily. CMGC Ser/Thr protein kinase family.

It localises to the membrane. The enzyme catalyses L-seryl-[protein] + ATP = O-phospho-L-seryl-[protein] + ADP + H(+). It catalyses the reaction L-threonyl-[protein] + ATP = O-phospho-L-threonyl-[protein] + ADP + H(+). The chain is Probable serine/threonine-protein kinase DDB_G0286481 from Dictyostelium discoideum (Social amoeba).